The chain runs to 172 residues: Small ribosomal subunit protein uS5 (172 aa).

Positions 17–80 (LREKMIAVNR…DEARRKMIKV (64 aa)) constitute an S5 DRBM domain.

The protein belongs to the universal ribosomal protein uS5 family. As to quaternary structure, part of the 30S ribosomal subunit. Contacts proteins S4 and S8.

With S4 and S12 plays an important role in translational accuracy. In terms of biological role, located at the back of the 30S subunit body where it stabilizes the conformation of the head with respect to the body. The chain is Small ribosomal subunit protein uS5 from Polynucleobacter asymbioticus (strain DSM 18221 / CIP 109841 / QLW-P1DMWA-1) (Polynucleobacter necessarius subsp. asymbioticus).